Here is a 368-residue protein sequence, read N- to C-terminus: Probable replication factor C subunit 5 (368 aa).

Residue 69–76 (GPPGTGKT) coordinates ATP.

The protein belongs to the activator 1 small subunits family. In terms of assembly, heteropentamer of various rfc subunits that forms a complex (RFC) with PCNA in the presence of ATP.

The protein localises to the nucleus. In terms of biological role, the elongation of primed DNA templates by DNA polymerase delta and epsilon requires the action of the accessory proteins proliferating cell nuclear antigen (PCNA) and activator 1. In Caenorhabditis elegans, this protein is Probable replication factor C subunit 5.